We begin with the raw amino-acid sequence, 138 residues long: Transcriptional regulator MraZ (138 aa).

SpoVT-AbrB domains lie at glutamate 3–glutamate 45 and alanine 74–arginine 117.

The protein belongs to the MraZ family. In terms of assembly, forms oligomers.

The protein localises to the cytoplasm. It is found in the nucleoid. In Symbiobacterium thermophilum (strain DSM 24528 / JCM 14929 / IAM 14863 / T), this protein is Transcriptional regulator MraZ.